The following is a 259-amino-acid chain: Ribose-5-phosphate isomerase (259 aa).

This sequence belongs to the ribose 5-phosphate isomerase family.

The protein localises to the cytoplasm. The catalysed reaction is aldehydo-D-ribose 5-phosphate = D-ribulose 5-phosphate. Its pathway is carbohydrate degradation; pentose phosphate pathway; D-ribose 5-phosphate from D-ribulose 5-phosphate (non-oxidative stage): step 1/1. The protein is Ribose-5-phosphate isomerase (RKI1) of Vanderwaltozyma polyspora (strain ATCC 22028 / DSM 70294 / BCRC 21397 / CBS 2163 / NBRC 10782 / NRRL Y-8283 / UCD 57-17) (Kluyveromyces polysporus).